A 440-amino-acid chain; its full sequence is Xylose isomerase (440 aa).

Residues His-100 and Asp-103 contribute to the active site. Residues Glu-231, Glu-267, His-270, Asp-295, Asp-306, Asp-308, and Asp-338 each coordinate Mg(2+).

This sequence belongs to the xylose isomerase family. Homotetramer. Mg(2+) is required as a cofactor.

The protein localises to the cytoplasm. It catalyses the reaction alpha-D-xylose = alpha-D-xylulofuranose. This Burkholderia cenocepacia (strain HI2424) protein is Xylose isomerase.